The chain runs to 72 residues: ATP synthase subunit c (72 aa).

2 consecutive transmembrane segments (helical) span residues 1–21 and 48–68; these read MSLGVLAAAIAVGLGALGAGI and MFIGVALVEALPIIGVVFSFI.

It belongs to the ATPase C chain family. As to quaternary structure, F-type ATPases have 2 components, F(1) - the catalytic core - and F(0) - the membrane proton channel. F(1) has five subunits: alpha(3), beta(3), gamma(1), delta(1), epsilon(1). F(0) has three main subunits: a(1), b(2) and c(10-14). The alpha and beta chains form an alternating ring which encloses part of the gamma chain. F(1) is attached to F(0) by a central stalk formed by the gamma and epsilon chains, while a peripheral stalk is formed by the delta and b chains.

It localises to the cell membrane. F(1)F(0) ATP synthase produces ATP from ADP in the presence of a proton or sodium gradient. F-type ATPases consist of two structural domains, F(1) containing the extramembraneous catalytic core and F(0) containing the membrane proton channel, linked together by a central stalk and a peripheral stalk. During catalysis, ATP synthesis in the catalytic domain of F(1) is coupled via a rotary mechanism of the central stalk subunits to proton translocation. In terms of biological role, key component of the F(0) channel; it plays a direct role in translocation across the membrane. A homomeric c-ring of between 10-14 subunits forms the central stalk rotor element with the F(1) delta and epsilon subunits. The polypeptide is ATP synthase subunit c (Geobacillus stearothermophilus (Bacillus stearothermophilus)).